Reading from the N-terminus, the 479-residue chain is B-cell CLL/lymphoma 6 member B protein (479 aa).

One can recognise a BTB domain in the interval Thr-38 to Pro-105. Disordered regions lie at residues Arg-143–Lys-190 and Gly-210–Thr-259. Over residues Ala-147–Ser-160 the composition is skewed to pro residues. Over residues Arg-162 to Thr-172 the composition is skewed to basic and acidic residues. The span at Ser-234 to Ser-244 shows a compositional bias: low complexity. 5 C2H2-type zinc fingers span residues Tyr-328 to His-350, Tyr-356 to His-378, Tyr-384 to His-406, Tyr-412 to His-434, and Tyr-440 to His-463.

As to quaternary structure, associates with BCL6 through the BTB domain. As to expression, ubiquitously expressed with higher expression found in heart and placenta.

It is found in the nucleus. In terms of biological role, acts as a sequence-specific transcriptional repressor in association with BCL6. May function in a narrow stage or be related to some events in the early B-cell development. The protein is B-cell CLL/lymphoma 6 member B protein (BCL6B) of Homo sapiens (Human).